The following is a 498-amino-acid chain: Calcium-dependent protein kinase 22 (498 aa).

Glycine 2 carries N-myristoyl glycine lipidation. The Protein kinase domain occupies 36–305 (YSFGDELGKG…AADVLEHPWM (270 aa)). ATP-binding positions include 42–50 (LGKGNFGTT) and lysine 65. Aspartate 164 (proton acceptor) is an active-site residue. A Phosphoserine modification is found at serine 204. The interval 309-339 (APDKPIDNVVLSRMKQFRAMNKLKKLALKVI) is autoinhibitory domain. EF-hand domains lie at 346–381 (EEIK…HGSK), 382–417 (LSET…RHRL), 418–453 (ERDE…HGMG), and 454–488 (DEAN…GILQ). Ca(2+)-binding residues include aspartate 359, aspartate 361, serine 363, serine 365, glutamate 370, aspartate 395, aspartate 397, asparagine 399, threonine 401, glutamate 406, aspartate 431, aspartate 433, serine 435, histidine 437, glutamate 442, aspartate 466, asparagine 468, aspartate 470, lysine 472, and glutamate 477.

It belongs to the protein kinase superfamily. Ser/Thr protein kinase family. CDPK subfamily.

It localises to the membrane. It carries out the reaction L-seryl-[protein] + ATP = O-phospho-L-seryl-[protein] + ADP + H(+). The enzyme catalyses L-threonyl-[protein] + ATP = O-phospho-L-threonyl-[protein] + ADP + H(+). Its activity is regulated as follows. Activated by calcium. Autophosphorylation may play an important role in the regulation of the kinase activity. Its function is as follows. May play a role in signal transduction pathways that involve calcium as a second messenger. The chain is Calcium-dependent protein kinase 22 (CPK22) from Arabidopsis thaliana (Mouse-ear cress).